The following is a 156-amino-acid chain: Ribosome maturation factor RimP (156 aa).

The protein belongs to the RimP family.

The protein resides in the cytoplasm. Its function is as follows. Required for maturation of 30S ribosomal subunits. This chain is Ribosome maturation factor RimP, found in Dictyoglomus thermophilum (strain ATCC 35947 / DSM 3960 / H-6-12).